Reading from the N-terminus, the 294-residue chain is Metallophosphoesterase MPPED2 (294 aa).

The Mn(2+) site is built by aspartate 65, histidine 67, aspartate 86, asparagine 117, and histidine 213. Asparagine 117 to histidine 118 is a binding site for GMP. GMP-binding positions include lysine 225–glutamate 226 and glycine 252–glutamate 255. Residue histidine 254 coordinates Mn(2+).

This sequence belongs to the UPF0046 family. In terms of assembly, homodimer. Requires Mn(2+) as cofactor. Co(2+) serves as cofactor. In terms of tissue distribution, expressed predominantly in fetal brain.

Inhibited by nmolar levels of AMP and GMP. In terms of biological role, displays low metallophosphoesterase activity (in vitro). May play a role in the development of the nervous system. This Homo sapiens (Human) protein is Metallophosphoesterase MPPED2 (MPPED2).